The following is a 123-amino-acid chain: Small ribosomal subunit protein uS12 (123 aa).

Asp-89 is modified (3-methylthioaspartic acid).

The protein belongs to the universal ribosomal protein uS12 family. In terms of assembly, part of the 30S ribosomal subunit. Contacts proteins S8 and S17. May interact with IF1 in the 30S initiation complex.

In terms of biological role, with S4 and S5 plays an important role in translational accuracy. Functionally, interacts with and stabilizes bases of the 16S rRNA that are involved in tRNA selection in the A site and with the mRNA backbone. Located at the interface of the 30S and 50S subunits, it traverses the body of the 30S subunit contacting proteins on the other side and probably holding the rRNA structure together. The combined cluster of proteins S8, S12 and S17 appears to hold together the shoulder and platform of the 30S subunit. This Anaeromyxobacter sp. (strain Fw109-5) protein is Small ribosomal subunit protein uS12.